The primary structure comprises 470 residues: Ras-like GTPase HI_1637 (470 aa).

A Walker A motif motif is present at residues 27-34 (GLSRSGKT). GTP contacts are provided by serine 29, glycine 32, lysine 33, threonine 34, alanine 35, tryptophan 98, serine 101, threonine 102, arginine 103, lysine 342, aspartate 344, and histidine 345. GDP contacts are provided by glycine 32, lysine 33, threonine 34, alanine 35, tryptophan 98, serine 101, and threonine 102. Lysine 342, aspartate 344, histidine 345, alanine 383, and valine 384 together coordinate GDP. Valine 384 serves as a coordination point for GTP.

The protein to E.coli YcjX. As to quaternary structure, monomer in solution. It depends on Mg(2+) as a cofactor.

It catalyses the reaction GTP + H2O = GDP + phosphate + H(+). With respect to regulation, alternates between an inactive form bound to GDP and an active form bound to GTP. Likely activated by a guanine nucleotide-exchange factor (GEF). Functionally, binds GTP and GDP. Has intrinsic GTPase activity. Does not hydrolyze ATP. May act as a transducer of stress responses. This is Ras-like GTPase HI_1637 from Haemophilus influenzae (strain ATCC 51907 / DSM 11121 / KW20 / Rd).